A 302-amino-acid chain; its full sequence is Methionyl-tRNA formyltransferase (302 aa).

108 to 111 (SLLP) provides a ligand contact to (6S)-5,6,7,8-tetrahydrofolate. Basic and acidic residues predominate over residues 276–288 (REGKRPMEPEEFL). The segment at 276-302 (REGKRPMEPEEFLRGFPLPEGSRAHTA) is disordered.

It belongs to the Fmt family.

The catalysed reaction is L-methionyl-tRNA(fMet) + (6R)-10-formyltetrahydrofolate = N-formyl-L-methionyl-tRNA(fMet) + (6S)-5,6,7,8-tetrahydrofolate + H(+). Attaches a formyl group to the free amino group of methionyl-tRNA(fMet). The formyl group appears to play a dual role in the initiator identity of N-formylmethionyl-tRNA by promoting its recognition by IF2 and preventing the misappropriation of this tRNA by the elongation apparatus. The polypeptide is Methionyl-tRNA formyltransferase (Cereibacter sphaeroides (strain ATCC 17029 / ATH 2.4.9) (Rhodobacter sphaeroides)).